We begin with the raw amino-acid sequence, 249 residues long: Methylthioribulose-1-phosphate dehydratase (249 aa).

A substrate-binding site is contributed by C102. Positions 120 and 122 each coordinate Zn(2+). The active-site Proton donor/acceptor is the E148. H205 lines the Zn(2+) pocket.

Belongs to the aldolase class II family. MtnB subfamily. Requires Zn(2+) as cofactor.

The protein resides in the cytoplasm. The catalysed reaction is 5-(methylsulfanyl)-D-ribulose 1-phosphate = 5-methylsulfanyl-2,3-dioxopentyl phosphate + H2O. Its pathway is amino-acid biosynthesis; L-methionine biosynthesis via salvage pathway; L-methionine from S-methyl-5-thio-alpha-D-ribose 1-phosphate: step 2/6. In terms of biological role, catalyzes the dehydration of methylthioribulose-1-phosphate (MTRu-1-P) into 2,3-diketo-5-methylthiopentyl-1-phosphate (DK-MTP-1-P). The protein is Methylthioribulose-1-phosphate dehydratase of Botryotinia fuckeliana (strain B05.10) (Noble rot fungus).